A 122-amino-acid chain; its full sequence is Large ribosomal subunit protein uL14 (122 aa).

It belongs to the universal ribosomal protein uL14 family. In terms of assembly, part of the 50S ribosomal subunit. Forms a cluster with proteins L3 and L19. In the 70S ribosome, L14 and L19 interact and together make contacts with the 16S rRNA in bridges B5 and B8.

Functionally, binds to 23S rRNA. Forms part of two intersubunit bridges in the 70S ribosome. This chain is Large ribosomal subunit protein uL14, found in Trichodesmium erythraeum (strain IMS101).